A 117-amino-acid polypeptide reads, in one-letter code: Ig heavy chain V region 108A (117 aa).

Residues 1–19 (MGWSWIFLFLLSGTAGVHS) form the signal peptide. Residues 20–117 (EVQLQQSGPE…EDSAVYYCAR (98 aa)) form the Ig-like domain.

This chain is Ig heavy chain V region 108A (Igh-VJ558), found in Mus musculus (Mouse).